A 727-amino-acid chain; its full sequence is Pentatricopeptide repeat-containing protein At2g33680 (727 aa).

PPR repeat units follow at residues 13–47, 48–78, 79–116, 117–150, 152–182, 183–213, 220–254, 255–285, 286–320, 321–355, 356–386, 387–421, 422–456, 457–487, 488–522, 523–553, and 559–593; these read HTST…GAST, CIQH…IICK, DVVS…DILP, NAYT…MSSF, DIYV…MPER, NTYT…FLRE, SDYV…GLLG, FVAL…SGDR, NSIT…GIKP, SEYT…GFER, HLFA…LQER, DVAL…GIIP, NDPT…GFGL, EVPI…TPNK, DVVS…GMEP, DDVT…MSDQ, and KVDH…HGLC. A type E motif region spans residues 594-669; that stretch reads LWRILLSACK…EVGCSWIELK (76 aa). Positions 670–700 are type E(+) motif; sequence NQYHVFVVGDTMHPMIEETKDLVCLVSRQMI.

This sequence belongs to the PPR family. PCMP-E subfamily.

This chain is Pentatricopeptide repeat-containing protein At2g33680 (PCMP-E19), found in Arabidopsis thaliana (Mouse-ear cress).